A 466-amino-acid chain; its full sequence is Methylenetetrahydrofolate--tRNA-(uracil-5-)-methyltransferase TrmFO (466 aa).

G14 to G19 is a binding site for FAD.

It belongs to the MnmG family. TrmFO subfamily. It depends on FAD as a cofactor.

The protein localises to the cytoplasm. The enzyme catalyses uridine(54) in tRNA + (6R)-5,10-methylene-5,6,7,8-tetrahydrofolate + NADH + H(+) = 5-methyluridine(54) in tRNA + (6S)-5,6,7,8-tetrahydrofolate + NAD(+). The catalysed reaction is uridine(54) in tRNA + (6R)-5,10-methylene-5,6,7,8-tetrahydrofolate + NADPH + H(+) = 5-methyluridine(54) in tRNA + (6S)-5,6,7,8-tetrahydrofolate + NADP(+). Its function is as follows. Catalyzes the folate-dependent formation of 5-methyl-uridine at position 54 (M-5-U54) in all tRNAs. The protein is Methylenetetrahydrofolate--tRNA-(uracil-5-)-methyltransferase TrmFO of Brucella abortus (strain 2308).